Reading from the N-terminus, the 69-residue chain is Putative membrane protein insertion efficiency factor (69 aa).

The protein belongs to the UPF0161 family.

It is found in the cell membrane. Could be involved in insertion of integral membrane proteins into the membrane. In Thermoanaerobacter pseudethanolicus (strain ATCC 33223 / 39E) (Clostridium thermohydrosulfuricum), this protein is Putative membrane protein insertion efficiency factor.